Here is a 465-residue protein sequence, read N- to C-terminus: Argininosuccinate lyase (465 aa).

The protein belongs to the lyase 1 family. Argininosuccinate lyase subfamily.

The protein resides in the cytoplasm. It carries out the reaction 2-(N(omega)-L-arginino)succinate = fumarate + L-arginine. It participates in amino-acid biosynthesis; L-arginine biosynthesis; L-arginine from L-ornithine and carbamoyl phosphate: step 3/3. In Halorhodospira halophila (strain DSM 244 / SL1) (Ectothiorhodospira halophila (strain DSM 244 / SL1)), this protein is Argininosuccinate lyase.